Here is a 247-residue protein sequence, read N- to C-terminus: Acidic leucine-rich nuclear phosphoprotein 32 family member A (247 aa).

Thr-15 bears the Phosphothreonine mark. Ser-17 is subject to Phosphoserine. LRR repeat units lie at residues 18 to 41 (DVKELVLDNCRSIEGKIEGLTDEF), 43 to 64 (ELEFLSTINVGLTSISNLPKLN), 65 to 87 (KLKKLELSENRISGDLEVLAEKC), and 89 to 110 (NLKHLNLSGNKIKDLSTIEPLK). The region spanning 123–161 (CEVTNLNAYRENVFKLLPQVMYLDGYDRDNKEAPDSDVE) is the LRRCT domain. The interval 150–172 (RDNKEAPDSDVEGYVEDDDEEDE) is necessary for tumor-suppressive function. The tract at residues 150-247 (RDNKEAPDSD…EPDDEGQEDD (98 aa)) is disordered. Over residues 157-230 (DSDVEGYVED…EDEEDAAEEE (74 aa)) the composition is skewed to acidic residues. Phosphoserine is present on residues Ser-158 and Ser-202. The interaction with E4F1 stretch occupies residues 165–247 (EDDDEEDEDE…EPDDEGQEDD (83 aa)).

Belongs to the ANP32 family. As to quaternary structure, component of the SET complex, composed of at least ANP32A, APEX1, HMGB2, NME1, SET and TREX1. Directly interacts with SET. Interacts with ATXN1/SCA1. Interacts with MAP1B. Interacts with ELAVL1. Part of the INHAT (inhibitor of histone acetyltransferases) complex. Interacts with E4F1. In terms of processing, phosphorylated on serine residues, at least in part by casein kinase 2/CK2. Post-translationally, some glutamate residues are glycylated by TTLL8. This modification occurs exclusively on glutamate residues and results in a glycine chain on the gamma-carboxyl group. Widely distributed in the central nervous system, with an abundant expression in the cerebellum.

It localises to the nucleus. It is found in the cytoplasm. The protein resides in the endoplasmic reticulum. In terms of biological role, multifunctional protein that is involved in the regulation of many processes including tumor suppression, apoptosis, cell cycle progression or transcription. Promotes apoptosis by favouring the activation of caspase-9/CASP9 and allowing apoptosome formation. In addition, plays a role in the modulation of histone acetylation and transcription as part of the INHAT (inhibitor of histone acetyltransferases) complex. Inhibits the histone-acetyltranferase activity of EP300/CREBBP (CREB-binding protein) and EP300/CREBBP-associated factor by histone masking. Preferentially binds to unmodified histone H3 and sterically inhibiting its acetylation and phosphorylation leading to cell growth inhibition. Participates in other biochemical processes such as regulation of mRNA nuclear-to-cytoplasmic translocation and stability by its association with ELAVL1 (Hu-antigen R). Plays a role in E4F1-mediated transcriptional repression as well as inhibition of protein phosphatase 2A. This is Acidic leucine-rich nuclear phosphoprotein 32 family member A (Anp32a) from Rattus norvegicus (Rat).